Consider the following 261-residue polypeptide: Large ribosomal subunit protein uL2 (261 aa).

The interval Val-207–Arg-233 is disordered.

This sequence belongs to the universal ribosomal protein uL2 family.

The protein resides in the cytoplasm. The sequence is that of Large ribosomal subunit protein uL2 (RpL8) from Aedes albopictus (Asian tiger mosquito).